Reading from the N-terminus, the 353-residue chain is Holliday junction branch migration complex subunit RuvB (353 aa).

Positions 1-183 are large ATPase domain (RuvB-L); it reads MNEPRIVAPQ…FGATYRLDFY (183 aa). Residues Leu22, Arg23, Gly64, Lys67, Thr68, Thr69, 130–132, Arg173, Tyr183, and Arg220 contribute to the ATP site; that span reads EDF. Thr68 lines the Mg(2+) pocket. The segment at 184 to 254 is small ATPAse domain (RuvB-S); sequence DTAALRAIVE…LARLALDQLA (71 aa). The interval 257–353 is head domain (RuvB-H); sequence ELGLDEVDRL…HAASERSSDA (97 aa). The DNA site is built by Arg312 and Arg317.

Belongs to the RuvB family. Homohexamer. Forms an RuvA(8)-RuvB(12)-Holliday junction (HJ) complex. HJ DNA is sandwiched between 2 RuvA tetramers; dsDNA enters through RuvA and exits via RuvB. An RuvB hexamer assembles on each DNA strand where it exits the tetramer. Each RuvB hexamer is contacted by two RuvA subunits (via domain III) on 2 adjacent RuvB subunits; this complex drives branch migration. In the full resolvosome a probable DNA-RuvA(4)-RuvB(12)-RuvC(2) complex forms which resolves the HJ.

It localises to the cytoplasm. The catalysed reaction is ATP + H2O = ADP + phosphate + H(+). In terms of biological role, the RuvA-RuvB-RuvC complex processes Holliday junction (HJ) DNA during genetic recombination and DNA repair, while the RuvA-RuvB complex plays an important role in the rescue of blocked DNA replication forks via replication fork reversal (RFR). RuvA specifically binds to HJ cruciform DNA, conferring on it an open structure. The RuvB hexamer acts as an ATP-dependent pump, pulling dsDNA into and through the RuvAB complex. RuvB forms 2 homohexamers on either side of HJ DNA bound by 1 or 2 RuvA tetramers; 4 subunits per hexamer contact DNA at a time. Coordinated motions by a converter formed by DNA-disengaged RuvB subunits stimulates ATP hydrolysis and nucleotide exchange. Immobilization of the converter enables RuvB to convert the ATP-contained energy into a lever motion, pulling 2 nucleotides of DNA out of the RuvA tetramer per ATP hydrolyzed, thus driving DNA branch migration. The RuvB motors rotate together with the DNA substrate, which together with the progressing nucleotide cycle form the mechanistic basis for DNA recombination by continuous HJ branch migration. Branch migration allows RuvC to scan DNA until it finds its consensus sequence, where it cleaves and resolves cruciform DNA. This chain is Holliday junction branch migration complex subunit RuvB, found in Thermomicrobium roseum (strain ATCC 27502 / DSM 5159 / P-2).